Reading from the N-terminus, the 529-residue chain is Peptide chain release factor 3 (529 aa).

Residues 11 to 280 (AKRRTFAIIS…GLVEWAPAPM (270 aa)) enclose the tr-type G domain. Residues 20–27 (SHPDAGKT), 88–92 (DTPGH), and 142–145 (NKLD) each bind GTP.

Belongs to the TRAFAC class translation factor GTPase superfamily. Classic translation factor GTPase family. PrfC subfamily.

The protein localises to the cytoplasm. Its function is as follows. Increases the formation of ribosomal termination complexes and stimulates activities of RF-1 and RF-2. It binds guanine nucleotides and has strong preference for UGA stop codons. It may interact directly with the ribosome. The stimulation of RF-1 and RF-2 is significantly reduced by GTP and GDP, but not by GMP. This chain is Peptide chain release factor 3, found in Klebsiella pneumoniae subsp. pneumoniae (strain ATCC 700721 / MGH 78578).